A 339-amino-acid polypeptide reads, in one-letter code: Phosphate acyltransferase (339 aa).

Belongs to the PlsX family. Homodimer. Probably interacts with PlsY.

The protein resides in the cytoplasm. The catalysed reaction is a fatty acyl-[ACP] + phosphate = an acyl phosphate + holo-[ACP]. It functions in the pathway lipid metabolism; phospholipid metabolism. Functionally, catalyzes the reversible formation of acyl-phosphate (acyl-PO(4)) from acyl-[acyl-carrier-protein] (acyl-ACP). This enzyme utilizes acyl-ACP as fatty acyl donor, but not acyl-CoA. This Helicobacter pylori (strain Shi470) protein is Phosphate acyltransferase.